A 151-amino-acid chain; its full sequence is 3-hydroxyacyl-[acyl-carrier-protein] dehydratase FabZ (151 aa).

Histidine 54 is a catalytic residue.

The protein belongs to the thioester dehydratase family. FabZ subfamily.

The protein resides in the cytoplasm. The catalysed reaction is a (3R)-hydroxyacyl-[ACP] = a (2E)-enoyl-[ACP] + H2O. Functionally, involved in unsaturated fatty acids biosynthesis. Catalyzes the dehydration of short chain beta-hydroxyacyl-ACPs and long chain saturated and unsaturated beta-hydroxyacyl-ACPs. The protein is 3-hydroxyacyl-[acyl-carrier-protein] dehydratase FabZ of Erwinia tasmaniensis (strain DSM 17950 / CFBP 7177 / CIP 109463 / NCPPB 4357 / Et1/99).